Here is a 695-residue protein sequence, read N- to C-terminus: Adhesion G protein-coupled receptor F4 (695 aa).

The N-terminal stretch at 1 to 21 (MKMKSQATMICCLVFFLSTEC) is a signal peptide. Topologically, residues 22-406 (SHYRSKIHLK…TDKVLDYITC (385 aa)) are extracellular. N-linked (GlcNAc...) asparagine glycans are attached at residues Asn61, Asn169, Asn177, Asn209, Asn229, Asn250, Asn257, Asn263, Asn264, Asn286, Asn309, and Asn340. The region spanning 249–397 (HNTSEKSLNF…SILMSSKSMT (149 aa)) is the GAIN-B domain. Intrachain disulfides connect Cys349–Cys376 and Cys364–Cys378. Residues 349–397 (CVGWHSKKRRWDEKACQMMLDIRNEVKCRCNYTSVVMSFSILMSSKSMT) are GPS. Asn379 carries N-linked (GlcNAc...) asparagine glycosylation. A helical membrane pass occupies residues 407–427 (IGLSVSILSLVLCLIIEATVW). At 428–440 (SRVVVTEISYMRH) the chain is on the cytoplasmic side. A helical membrane pass occupies residues 441–461 (VCIVNIAVSLLTANVWFIIGS). The Extracellular portion of the chain corresponds to 462–485 (HFNIKAQDYNMCVAVTFFSHFFYL). The helical transmembrane segment at 486-506 (SLFFWMLFKALLIIYGILVIF) threads the bilayer. The Cytoplasmic portion of the chain corresponds to 507–515 (RRMMKSRMM). Residues 516–536 (VIGFAIGYGCPLIIAVTTVAI) traverse the membrane as a helical segment. The Extracellular portion of the chain corresponds to 537–561 (TEPEKGYMRPEACWLNWDNTKALLA). The chain crosses the membrane as a helical span at residues 562 to 582 (FAIPAFVIVAVNLIVVLVVAV). At 583 to 606 (NTQRPSIGSSKSQDVVIIMRISKN) the chain is on the cytoplasmic side. The helical transmembrane segment at 607-627 (VAILTPLLGLTWGFGIATLIE) threads the bilayer. At 628 to 634 (GTSLTFH) the chain is on the extracellular side. A helical transmembrane segment spans residues 635–655 (IIFALLNAFQGFFILLFGTIM). Residues 656 to 695 (DHKIRDALRMRMSSLKGKSRAAENASLGPTNGSKLMNRQG) lie on the Cytoplasmic side of the membrane. The tract at residues 674 to 695 (SRAAENASLGPTNGSKLMNRQG) is disordered. Positions 682–695 (LGPTNGSKLMNRQG) are enriched in polar residues.

It belongs to the G-protein coupled receptor 2 family. Adhesion G-protein coupled receptor (ADGR) subfamily.

Its subcellular location is the membrane. Functionally, orphan receptor. This is Adhesion G protein-coupled receptor F4 (ADGRF4) from Homo sapiens (Human).